A 275-amino-acid chain; its full sequence is Probable histone chaperone asf-1 (275 aa).

Acidic residues-rich tracts occupy residues 157–166 (EDPVAEPVED), 183–207 (DGQE…EVDL), and 230–247 (KMED…DDEP). The segment at 157 to 275 (EDPVAEPVED…SDKTNNEMVQ (119 aa)) is disordered. Over residues 265–275 (LSDKTNNEMVQ) the composition is skewed to basic and acidic residues.

It belongs to the ASF1 family. As to quaternary structure, interacts with histone H3 and histone H4.

It is found in the nucleus. Its function is as follows. Histone chaperone that facilitates histone deposition and histone exchange and removal during nucleosome assembly and disassembly. The chain is Probable histone chaperone asf-1 from Caenorhabditis elegans.